Consider the following 413-residue polypeptide: MTLANDFGYSTAMSSSYSALHTSVEDRYHKLPNSFWVSSGQELMNNPVPCQSVSGGNSGGYLFPSSSGYCNVSAVLPHGRNLQNQPPVSTVPRDRLAMQDCPLIAQSSLINHHPQEFIDPLHEFFDFSDHVPVQNLQAESSGVRVDSSVELHKKSEWQDWADQLISVDDGSEPNWSELLGDSSSHNPNSEIPTPFLDVPRLDITANQQQQMVSSEDQLSGRNSSSSVATSKQRMRWTPELHEAFVEAVNQLGGSERATPKAVLKLLNNPGLTIYHVKSHLQKYRTARYKPETSEVTGEPQEKKMTSIEDIKSLDMKTSVEITQALRLQMEVQKRLHEQLEIQRSLQLQIEKQGRYLQMMFEKQQKIQDNKSSSSEASPKQCNGSFAEVEVGLETLTGDQNESASASRKRVRED.

2 disordered regions span residues 171–196 and 208–233; these read SEPNWSELLGDSSSHNPNSEIPTPFL and QQQMVSSEDQLSGRNSSSSVATSKQR. 2 stretches are compositionally biased toward polar residues: residues 181 to 191 and 208 to 231; these read DSSSHNPNSEI and QQQMVSSEDQLSGRNSSSSVATSK. Positions 228–288 constitute an HTH myb-type domain; the sequence is ATSKQRMRWT…HLQKYRTARY (61 aa). Positions 259–284 form a DNA-binding region, H-T-H motif; sequence PKAVLKLLNNPGLTIYHVKSHLQKYR. The tract at residues 322-342 is coiled coil; the sequence is TQALRLQMEVQKRLHEQLEIQ. Positions 335–340 match the LHEQLE motif; sequence LHEQLE. Residues 363–413 form a disordered region; the sequence is QQKIQDNKSSSSEASPKQCNGSFAEVEVGLETLTGDQNESASASRKRVRED. 2 stretches are compositionally biased toward polar residues: residues 369–383 and 396–405; these read NKSSSSEASPKQCNG and TGDQNESASA.

The protein belongs to the MYB-CC family. Homodimers and heterodimers. Interacts with MED25. Does not interact with PHL2 or PHL3. Expressed in shoots and roots.

It is found in the nucleus. Transcription factor acting as central integrator of phosphate starvation responses. Regulates FER1 expression upon phosphate starvation, linking iron and phosphate homeostasis. The polypeptide is Protein PHR1-LIKE 1 (PHL1) (Arabidopsis thaliana (Mouse-ear cress)).